The following is a 294-amino-acid chain: Secreted frizzled-related protein 2 (294 aa).

The first 24 residues, 1–24 (MPRGPGSLLLLVLASHCCLGSARG), serve as a signal peptide directing secretion. The FZ domain maps to 34–154 (YKRSNCKPIP…PQDNDLCIPL (121 aa)). Intrachain disulfides connect Cys39–Cys102, Cys49–Cys95, Cys86–Cys124, Cys113–Cys151, Cys117–Cys141, Cys171–Cys244, Cys174–Cys246, and Cys189–Cys294. The NTR domain maps to 171–294 (CEACKNKNED…ISRSIRKLQC (124 aa)).

It belongs to the secreted frizzled-related protein (sFRP) family.

It is found in the secreted. In terms of biological role, soluble frizzled-related proteins (sFRPS) function as modulators of Wnt signaling through direct interaction with Wnts. They have a role in regulating cell growth and differentiation in specific cell types. SFRP2 may be important for eye retinal development and for myogenesis. This is Secreted frizzled-related protein 2 (SFRP2) from Canis lupus familiaris (Dog).